The sequence spans 81 residues: UPF0386 protein Smed_0945 (81 aa).

It belongs to the UPF0386 family.

This is UPF0386 protein Smed_0945 from Sinorhizobium medicae (strain WSM419) (Ensifer medicae).